The following is a 73-amino-acid chain: Translation initiation factor IF-1 (73 aa).

An S1-like domain is found at 1 to 73; that stretch reads MAKKQGAIEI…TRGRIVYRYK (73 aa).

The protein belongs to the IF-1 family. As to quaternary structure, component of the 30S ribosomal translation pre-initiation complex which assembles on the 30S ribosome in the order IF-2 and IF-3, IF-1 and N-formylmethionyl-tRNA(fMet); mRNA recruitment can occur at any time during PIC assembly.

Its subcellular location is the cytoplasm. In terms of biological role, one of the essential components for the initiation of protein synthesis. Stabilizes the binding of IF-2 and IF-3 on the 30S subunit to which N-formylmethionyl-tRNA(fMet) subsequently binds. Helps modulate mRNA selection, yielding the 30S pre-initiation complex (PIC). Upon addition of the 50S ribosomal subunit IF-1, IF-2 and IF-3 are released leaving the mature 70S translation initiation complex. In Streptomyces coelicolor (strain ATCC BAA-471 / A3(2) / M145), this protein is Translation initiation factor IF-1.